A 233-amino-acid polypeptide reads, in one-letter code: Small ribosomal subunit protein uS2 (233 aa).

This sequence belongs to the universal ribosomal protein uS2 family.

The polypeptide is Small ribosomal subunit protein uS2 (Bacillus cytotoxicus (strain DSM 22905 / CIP 110041 / 391-98 / NVH 391-98)).